A 641-amino-acid polypeptide reads, in one-letter code: Glycerol metabolism operon regulatory protein (641 aa).

The tract at residues 1 to 318 is sensor domain; sequence MTTHTQDIGK…MRQLMTSQLG (318 aa). Residues 52–189 form the GAF domain; sequence ALLTIAQAAL…AIAREVGNSL (138 aa). The region spanning 203 to 265 is the PAS domain; the sequence is NQMYGLLESM…MLLRRAIKHA (63 aa). One can recognise a Sigma-54 factor interaction domain in the interval 327 to 552; it reads MSTDDPETRR…LNSIIENIAI (226 aa). ATP-binding positions include 355-362 and 415-424; these read GEEGVGKE and ANGGTLFLEK.

Its function is as follows. Transcriptional activator of the glycerol utilization dha operon. This is Glycerol metabolism operon regulatory protein from Citrobacter freundii.